The chain runs to 353 residues: Photosystem II D2 protein (353 aa).

N-acetylthreonine is present on Thr-2. Thr-2 carries the post-translational modification Phosphothreonine. A helical transmembrane segment spans residues 41–61; the sequence is CAYFAVGGWFTGTTFVTSWYT. Position 118 (His-118) interacts with chlorophyll a. A helical membrane pass occupies residues 125-141; it reads GFMLRQFELARSVQLRP. Pheophytin a-binding residues include Gln-130 and Asn-143. The chain crosses the membrane as a helical span at residues 153–166; sequence VFVSVFLIYPLGQS. Chlorophyll a is bound at residue His-198. Residues 208–228 traverse the membrane as a helical segment; it reads AALLCAIHGATVENTLFEDGD. Residues His-215 and Phe-262 each contribute to the a plastoquinone site. Position 215 (His-215) interacts with Fe cation. A Fe cation-binding site is contributed by His-269. Residues 279–295 form a helical membrane-spanning segment; it reads GLWMSALGVVGLALNLR.

It belongs to the reaction center PufL/M/PsbA/D family. In terms of assembly, PSII is composed of 1 copy each of membrane proteins PsbA, PsbB, PsbC, PsbD, PsbE, PsbF, PsbH, PsbI, PsbJ, PsbK, PsbL, PsbM, PsbT, PsbX, PsbY, PsbZ, Psb30/Ycf12, at least 3 peripheral proteins of the oxygen-evolving complex and a large number of cofactors. It forms dimeric complexes. The D1/D2 heterodimer binds P680, chlorophylls that are the primary electron donor of PSII, and subsequent electron acceptors. It shares a non-heme iron and each subunit binds pheophytin, quinone, additional chlorophylls, carotenoids and lipids. There is also a Cl(-1) ion associated with D1 and D2, which is required for oxygen evolution. The PSII complex binds additional chlorophylls, carotenoids and specific lipids. serves as cofactor.

It is found in the plastid. It localises to the chloroplast thylakoid membrane. The catalysed reaction is 2 a plastoquinone + 4 hnu + 2 H2O = 2 a plastoquinol + O2. Functionally, photosystem II (PSII) is a light-driven water:plastoquinone oxidoreductase that uses light energy to abstract electrons from H(2)O, generating O(2) and a proton gradient subsequently used for ATP formation. It consists of a core antenna complex that captures photons, and an electron transfer chain that converts photonic excitation into a charge separation. The D1/D2 (PsbA/PsbD) reaction center heterodimer binds P680, the primary electron donor of PSII as well as several subsequent electron acceptors. D2 is needed for assembly of a stable PSII complex. This chain is Photosystem II D2 protein, found in Cicer arietinum (Chickpea).